Reading from the N-terminus, the 74-residue chain is Omega-conotoxin-like protein 1 (74 aa).

The first 20 residues, 1–20, serve as a signal peptide directing secretion; it reads MSKFILLVCILLLTTNIVSA. 3 cysteine pairs are disulfide-bonded: Cys24-Cys38, Cys31-Cys43, and Cys37-Cys50.

In terms of tissue distribution, highly expressed in brain. Is also found in hemolymph.

Functionally, the impact of this protein on the neuronal activity of the honeybee brain is not known. It does not affect apparent movement or hatching of blowfly larvae. However, when injected into fish, it induces a strong reversible paralytic effect. In addition, the presence of this small peptide in the hemolymph of adult drones together with its induction after bacterial infection suggests that this peptide exhibits antibacterial activity. This peptide may act by inhibiting ion channels. The polypeptide is Omega-conotoxin-like protein 1 (Apis mellifera (Honeybee)).